We begin with the raw amino-acid sequence, 266 residues long: Small ribosomal subunit protein uS3m (266 aa).

Belongs to the universal ribosomal protein uS3 family.

Its subcellular location is the mitochondrion. This Mycosarcoma maydis (Corn smut fungus) protein is Small ribosomal subunit protein uS3m (MRPS3).